Consider the following 289-residue polypeptide: L-alanyl-D-glutamate peptidase (289 aa).

This sequence belongs to the peptidase M15C family.

It localises to the secreted. Functionally, cell wall lytic enzyme. Hydrolyzes the link between L-alanine and D-glutamate residues in certain bacterial cell-wall glycopeptides. This Listeria monocytogenes (Bacteriophage A500) protein is L-alanyl-D-glutamate peptidase (ply).